The following is a 255-amino-acid chain: tRNA (guanine-N(1)-)-methyltransferase (255 aa).

S-adenosyl-L-methionine is bound by residues G113 and 133–138 (IGDYVL).

This sequence belongs to the RNA methyltransferase TrmD family. In terms of assembly, homodimer.

Its subcellular location is the cytoplasm. It catalyses the reaction guanosine(37) in tRNA + S-adenosyl-L-methionine = N(1)-methylguanosine(37) in tRNA + S-adenosyl-L-homocysteine + H(+). Specifically methylates guanosine-37 in various tRNAs. The chain is tRNA (guanine-N(1)-)-methyltransferase from Escherichia coli O81 (strain ED1a).